Consider the following 226-residue polypeptide: PKHD-type hydroxylase TERTU_2553 (226 aa).

Residues lysine 78–serine 177 enclose the Fe2OG dioxygenase domain. Residues histidine 96, aspartate 98, and histidine 158 each coordinate Fe cation. 2-oxoglutarate is bound at residue arginine 168.

Requires Fe(2+) as cofactor. It depends on L-ascorbate as a cofactor.

The chain is PKHD-type hydroxylase TERTU_2553 from Teredinibacter turnerae (strain ATCC 39867 / T7901).